Consider the following 170-residue polypeptide: UPF0201 protein MJ1564 (170 aa).

Over residues 133-148 (NEDELEEEEEKEDSEE) the composition is skewed to acidic residues. A disordered region spans residues 133–170 (NEDELEEEEEKEDSEEIKEGHKEENNLKIKVIDNSSGD). Residues 149–163 (IKEGHKEENNLKIKV) are compositionally biased toward basic and acidic residues.

The protein belongs to the UPF0201 family.

This Methanocaldococcus jannaschii (strain ATCC 43067 / DSM 2661 / JAL-1 / JCM 10045 / NBRC 100440) (Methanococcus jannaschii) protein is UPF0201 protein MJ1564.